The sequence spans 208 residues: Holliday junction resolvase RecU (208 aa).

Mg(2+) contacts are provided by Thr87, Asp89, Glu102, and Gln121.

The protein belongs to the RecU family. Mg(2+) is required as a cofactor.

Its subcellular location is the cytoplasm. The catalysed reaction is Endonucleolytic cleavage at a junction such as a reciprocal single-stranded crossover between two homologous DNA duplexes (Holliday junction).. Its function is as follows. Endonuclease that resolves Holliday junction intermediates in genetic recombination. Cleaves mobile four-strand junctions by introducing symmetrical nicks in paired strands. Promotes annealing of linear ssDNA with homologous dsDNA. Required for DNA repair, homologous recombination and chromosome segregation. This chain is Holliday junction resolvase RecU, found in Staphylococcus aureus (strain Mu3 / ATCC 700698).